We begin with the raw amino-acid sequence, 431 residues long: 2-oxoisovalerate dehydrogenase subunit alpha, mitochondrial (431 aa).

A thiamine diphosphate-binding site is contributed by 140 to 142; sequence QYR. S189, T194, and Q195 together coordinate K(+).

The protein belongs to the BCKDHA family. Thiamine diphosphate serves as cofactor.

It is found in the mitochondrion matrix. It carries out the reaction N(6)-[(R)-lipoyl]-L-lysyl-[protein] + 3-methyl-2-oxobutanoate + H(+) = N(6)-[(R)-S(8)-2-methylpropanoyldihydrolipoyl]-L-lysyl-[protein] + CO2. It functions in the pathway lipid metabolism; fatty acid biosynthesis. Functionally, the branched-chain alpha-keto dehydrogenase complex catalyzes the overall conversion of alpha-keto acids to acyl-CoA and CO(2). It contains multiple copies of three enzymatic components: branched-chain alpha-keto acid decarboxylase (E1), lipoamide acyltransferase (E2) and lipoamide dehydrogenase (E3). Required for the production of the monomethyl branched-chain fatty acids (mmBCFAs) isopentadecanoate (C15iso) and isoheptadecanoate (C17iso). The sequence is that of 2-oxoisovalerate dehydrogenase subunit alpha, mitochondrial from Caenorhabditis elegans.